The following is a 49-amino-acid chain: Photosystem II reaction center protein K (49 aa).

A propeptide spanning residues Met1 to Gly12 is cleaved from the precursor. Residues Ile24–Ala44 traverse the membrane as a helical segment.

The protein belongs to the PsbK family. In terms of assembly, PSII is composed of 1 copy each of membrane proteins PsbA, PsbB, PsbC, PsbD, PsbE, PsbF, PsbH, PsbI, PsbJ, PsbK, PsbL, PsbM, PsbT, PsbX, PsbY, PsbZ, Psb30/Ycf12, at least 3 peripheral proteins of the oxygen-evolving complex and a large number of cofactors. It forms dimeric complexes.

It localises to the plastid. It is found in the chloroplast thylakoid membrane. Functionally, one of the components of the core complex of photosystem II (PSII). PSII is a light-driven water:plastoquinone oxidoreductase that uses light energy to abstract electrons from H(2)O, generating O(2) and a proton gradient subsequently used for ATP formation. It consists of a core antenna complex that captures photons, and an electron transfer chain that converts photonic excitation into a charge separation. This is Photosystem II reaction center protein K from Phacus acuminatus.